We begin with the raw amino-acid sequence, 246 residues long: tRNA (guanine-N(7)-)-methyltransferase (246 aa).

S-adenosyl-L-methionine is bound by residues Glu76, Glu101, Asp128, and Asp151. Asp151 is a catalytic residue. Lys155 provides a ligand contact to substrate. An interaction with RNA region spans residues 157-162; that stretch reads RHNKRR. Residues Asp187 and 222–225 contribute to the substrate site; that span reads TKFE.

It belongs to the class I-like SAM-binding methyltransferase superfamily. TrmB family.

It catalyses the reaction guanosine(46) in tRNA + S-adenosyl-L-methionine = N(7)-methylguanosine(46) in tRNA + S-adenosyl-L-homocysteine. It participates in tRNA modification; N(7)-methylguanine-tRNA biosynthesis. Its function is as follows. Catalyzes the formation of N(7)-methylguanine at position 46 (m7G46) in tRNA. In Dechloromonas aromatica (strain RCB), this protein is tRNA (guanine-N(7)-)-methyltransferase.